The chain runs to 160 residues: SsrA-binding protein (160 aa).

The segment covering 138–148 (KRDDIKDREWQ) has biased composition (basic and acidic residues). Residues 138–160 (KRDDIKDREWQTAKSRIMKHANR) form a disordered region.

Belongs to the SmpB family.

Its subcellular location is the cytoplasm. Functionally, required for rescue of stalled ribosomes mediated by trans-translation. Binds to transfer-messenger RNA (tmRNA), required for stable association of tmRNA with ribosomes. tmRNA and SmpB together mimic tRNA shape, replacing the anticodon stem-loop with SmpB. tmRNA is encoded by the ssrA gene; the 2 termini fold to resemble tRNA(Ala) and it encodes a 'tag peptide', a short internal open reading frame. During trans-translation Ala-aminoacylated tmRNA acts like a tRNA, entering the A-site of stalled ribosomes, displacing the stalled mRNA. The ribosome then switches to translate the ORF on the tmRNA; the nascent peptide is terminated with the 'tag peptide' encoded by the tmRNA and targeted for degradation. The ribosome is freed to recommence translation, which seems to be the essential function of trans-translation. This is SsrA-binding protein from Serratia proteamaculans (strain 568).